Here is a 627-residue protein sequence, read N- to C-terminus: Phosphomethylpyrimidine synthase (627 aa).

The segment covering 1-24 (MSATQKNNITRLEQLDRQSTQPFP) has biased composition (polar residues). Positions 1–29 (MSATQKNNITRLEQLDRQSTQPFPNSRKV) are disordered. Substrate is bound by residues Asn231, Met260, Tyr289, His325, 345-347 (SRG), 386-389 (DGLR), and Glu425. Position 429 (His429) interacts with Zn(2+). A substrate-binding site is contributed by Tyr452. Position 493 (His493) interacts with Zn(2+). [4Fe-4S] cluster-binding residues include Cys573, Cys576, and Cys581.

The protein belongs to the ThiC family. In terms of assembly, homodimer. [4Fe-4S] cluster serves as cofactor.

It carries out the reaction 5-amino-1-(5-phospho-beta-D-ribosyl)imidazole + S-adenosyl-L-methionine = 4-amino-2-methyl-5-(phosphooxymethyl)pyrimidine + CO + 5'-deoxyadenosine + formate + L-methionine + 3 H(+). It participates in cofactor biosynthesis; thiamine diphosphate biosynthesis. Its function is as follows. Catalyzes the synthesis of the hydroxymethylpyrimidine phosphate (HMP-P) moiety of thiamine from aminoimidazole ribotide (AIR) in a radical S-adenosyl-L-methionine (SAM)-dependent reaction. The protein is Phosphomethylpyrimidine synthase of Pseudomonas aeruginosa (strain LESB58).